The primary structure comprises 730 residues: Synaptogenesis protein syg-1 (730 aa).

Residues 1–18 (MVRWQTWPLLLLFQLVTC) form the signal peptide. At 19-551 (QQLQQRIVEA…WIVITAKFDR (533 aa)) the chain is on the extracellular side. 5 consecutive Ig-like domains span residues 23–123 (QRIV…AKLT), 131–265 (PKIV…VKLS), 270–352 (PQIN…IKLN), 357–433 (ARIM…QILS), and 441–540 (PPTV…RNIL). 5 disulfide bridges follow: C44-C104, C152-C246, C292-C336, C378-C420, and C462-C519. N-linked (GlcNAc...) asparagine glycans are attached at residues N93 and N206. Residues 552–572 (MVALAIISAGVLLVSLLCCLC) form a helical membrane-spanning segment. Over 573–730 (MCRSNCRSRK…RPISRTSTHV (158 aa)) the chain is Cytoplasmic.

The protein belongs to the immunoglobulin superfamily. Interacts with skr-1. Interacts with syg-2. Interacts with the WAVE regulatory complex; the interaction leads to formation of a synaptic F-actin network that is required for synapse formation and axon branching. In terms of tissue distribution, expression in head motor neurons, occasionally in HSN neurons and weakly in other cells in the vulval region. Expressed in the primary synapse region of HSNL motor neuron.

It localises to the cell membrane. The protein resides in the cell projection. It is found in the axon. The protein localises to the synapse. In terms of biological role, cell adhesion protein. Involved in synapse formation in the HSNL egg-laying motor neuron. Inhibits assembly of the SCF(sel-10) E3 ubiquitin ligase complex at synapses, and protects them from elimination. Also required for F-actin assembly at the synaptic region and for axon branch formation. The protein is Synaptogenesis protein syg-1 of Caenorhabditis elegans.